The sequence spans 317 residues: Malate dehydrogenase (317 aa).

NAD(+)-binding positions include 7 to 13 (GAAGGIG) and Asp-34. Positions 81 and 87 each coordinate substrate. NAD(+)-binding positions include Asn-94 and 117 to 119 (VTN). Substrate is bound by residues Asn-119 and Arg-153. His-177 functions as the Proton acceptor in the catalytic mechanism. Residue Met-231 participates in NAD(+) binding.

It belongs to the LDH/MDH superfamily. MDH type 1 family. As to quaternary structure, homodimer.

The enzyme catalyses (S)-malate + NAD(+) = oxaloacetate + NADH + H(+). Catalyzes the reversible oxidation of malate to oxaloacetate. This Actinobacillus pleuropneumoniae serotype 7 (strain AP76) protein is Malate dehydrogenase.